We begin with the raw amino-acid sequence, 361 residues long: Phospho-N-acetylmuramoyl-pentapeptide-transferase (361 aa).

A run of 10 helical transmembrane segments spans residues 26–46, 73–93, 98–118, 139–159, 168–188, 200–220, 237–257, 264–284, 289–309, and 339–359; these read SILA…VLIQ, TMGG…WGDL, VWLV…DDWI, IFGL…AAVT, IALP…IVGF, GLAI…AYAS, AGDL…FLWF, VFMG…IAVI, LVLV…IIQV, and VIVR…ATLK.

This sequence belongs to the glycosyltransferase 4 family. MraY subfamily. Mg(2+) serves as cofactor.

The protein localises to the cell inner membrane. It catalyses the reaction UDP-N-acetyl-alpha-D-muramoyl-L-alanyl-gamma-D-glutamyl-meso-2,6-diaminopimeloyl-D-alanyl-D-alanine + di-trans,octa-cis-undecaprenyl phosphate = di-trans,octa-cis-undecaprenyl diphospho-N-acetyl-alpha-D-muramoyl-L-alanyl-D-glutamyl-meso-2,6-diaminopimeloyl-D-alanyl-D-alanine + UMP. It participates in cell wall biogenesis; peptidoglycan biosynthesis. In terms of biological role, catalyzes the initial step of the lipid cycle reactions in the biosynthesis of the cell wall peptidoglycan: transfers peptidoglycan precursor phospho-MurNAc-pentapeptide from UDP-MurNAc-pentapeptide onto the lipid carrier undecaprenyl phosphate, yielding undecaprenyl-pyrophosphoryl-MurNAc-pentapeptide, known as lipid I. The sequence is that of Phospho-N-acetylmuramoyl-pentapeptide-transferase from Xylella fastidiosa (strain M12).